A 189-amino-acid chain; its full sequence is Interferon alpha-6 (189 aa).

The N-terminal stretch at 1–20 (MALPFALLMALVVLSCKSSC) is a signal peptide. Cystine bridges form between cysteine 24–cysteine 122 and cysteine 52–cysteine 162.

This sequence belongs to the alpha/beta interferon family.

It is found in the secreted. Functionally, produced by macrophages, IFN-alpha have antiviral activities. Interferon stimulates the production of two enzymes: a protein kinase and an oligoadenylate synthetase. This is Interferon alpha-6 (IFNA6) from Homo sapiens (Human).